The sequence spans 315 residues: Tetraacyldisaccharide 4'-kinase (315 aa).

52–59 (TVGGTGKT) serves as a coordination point for ATP.

The protein belongs to the LpxK family.

It carries out the reaction a lipid A disaccharide + ATP = a lipid IVA + ADP + H(+). Its pathway is glycolipid biosynthesis; lipid IV(A) biosynthesis; lipid IV(A) from (3R)-3-hydroxytetradecanoyl-[acyl-carrier-protein] and UDP-N-acetyl-alpha-D-glucosamine: step 6/6. Functionally, transfers the gamma-phosphate of ATP to the 4'-position of a tetraacyldisaccharide 1-phosphate intermediate (termed DS-1-P) to form tetraacyldisaccharide 1,4'-bis-phosphate (lipid IVA). This Ruthia magnifica subsp. Calyptogena magnifica protein is Tetraacyldisaccharide 4'-kinase.